The following is a 92-amino-acid chain: Acylphosphatase (92 aa).

The region spanning 5–92 (RWHLLVSGKV…QEFTDFRTTH (88 aa)) is the Acylphosphatase-like domain. Residues Arg20 and Asn38 contribute to the active site.

It belongs to the acylphosphatase family.

It carries out the reaction an acyl phosphate + H2O = a carboxylate + phosphate + H(+). This is Acylphosphatase (acyP) from Marinobacter nauticus (strain ATCC 700491 / DSM 11845 / VT8) (Marinobacter aquaeolei).